Reading from the N-terminus, the 417-residue chain is Serine hydroxymethyltransferase (417 aa).

(6S)-5,6,7,8-tetrahydrofolate is bound by residues leucine 121 and 125-127; that span reads GHL. Lysine 229 carries the N6-(pyridoxal phosphate)lysine modification. 355-357 is a (6S)-5,6,7,8-tetrahydrofolate binding site; sequence SPF.

The protein belongs to the SHMT family. In terms of assembly, homodimer. Requires pyridoxal 5'-phosphate as cofactor.

The protein localises to the cytoplasm. It carries out the reaction (6R)-5,10-methylene-5,6,7,8-tetrahydrofolate + glycine + H2O = (6S)-5,6,7,8-tetrahydrofolate + L-serine. It functions in the pathway one-carbon metabolism; tetrahydrofolate interconversion. Its pathway is amino-acid biosynthesis; glycine biosynthesis; glycine from L-serine: step 1/1. In terms of biological role, catalyzes the reversible interconversion of serine and glycine with tetrahydrofolate (THF) serving as the one-carbon carrier. This reaction serves as the major source of one-carbon groups required for the biosynthesis of purines, thymidylate, methionine, and other important biomolecules. Also exhibits THF-independent aldolase activity toward beta-hydroxyamino acids, producing glycine and aldehydes, via a retro-aldol mechanism. This is Serine hydroxymethyltransferase from Shewanella amazonensis (strain ATCC BAA-1098 / SB2B).